Reading from the N-terminus, the 244-residue chain is Large ribosomal subunit protein uL2 (244 aa).

Over residues 1-12 (MGKRILVQRRGR) the composition is skewed to basic residues. Disordered stretches follow at residues 1–26 (MGKRILVQRRGRGGSQFRSPSWKRDG) and 193–225 (AMSPYAHPHGGGSHQKGGTPVPKTAPPGQKVGF).

The protein belongs to the universal ribosomal protein uL2 family. Part of the 50S ribosomal subunit. Forms a bridge to the 30S subunit in the 70S ribosome.

Functionally, one of the primary rRNA binding proteins. Required for association of the 30S and 50S subunits to form the 70S ribosome, for tRNA binding and peptide bond formation. It has been suggested to have peptidyltransferase activity; this is somewhat controversial. Makes several contacts with the 16S rRNA in the 70S ribosome. The polypeptide is Large ribosomal subunit protein uL2 (Pyrobaculum calidifontis (strain DSM 21063 / JCM 11548 / VA1)).